Reading from the N-terminus, the 467-residue chain is 3-isopropylmalate dehydratase large subunit (467 aa).

[4Fe-4S] cluster contacts are provided by cysteine 347, cysteine 407, and cysteine 410.

The protein belongs to the aconitase/IPM isomerase family. LeuC type 1 subfamily. As to quaternary structure, heterodimer of LeuC and LeuD. Requires [4Fe-4S] cluster as cofactor.

The enzyme catalyses (2R,3S)-3-isopropylmalate = (2S)-2-isopropylmalate. Its pathway is amino-acid biosynthesis; L-leucine biosynthesis; L-leucine from 3-methyl-2-oxobutanoate: step 2/4. Catalyzes the isomerization between 2-isopropylmalate and 3-isopropylmalate, via the formation of 2-isopropylmaleate. The chain is 3-isopropylmalate dehydratase large subunit from Trichormus variabilis (strain ATCC 29413 / PCC 7937) (Anabaena variabilis).